Here is a 1607-residue protein sequence, read N- to C-terminus: Abnormal cell migration protein 38 (1607 aa).

12 disordered regions span residues 14 to 52 (EFNK…SQDF), 67 to 93 (RLSP…QYHV), 167 to 222 (STSY…AAQA), 326 to 425 (GSSA…PPSQ), 459 to 478 (SPNT…GMDQ), 549 to 594 (MVHR…QHSY), 845 to 931 (YDEN…PETE), 1017 to 1061 (SVQV…DYDM), 1141 to 1241 (EPSP…VTPK), 1319 to 1378 (ETPN…KGQL), 1392 to 1445 (FANV…PQAV), and 1517 to 1607 (KVKT…STDP). Composition is skewed to polar residues over residues 81-93 (PGPS…QYHV) and 179-191 (PSGN…NHQQ). Positions 195 to 205 (VPQVQQQPAKP) are enriched in low complexity. Over residues 206–218 (KTTKKRPPPKKKT) the composition is skewed to basic residues. Low complexity predominate over residues 327–341 (SSASSSAQPSQPAKK). 2 stretches are compositionally biased toward polar residues: residues 349–371 (VPNT…QITP) and 379–425 (PTTT…PPSQ). Over residues 585 to 594 (NSHSQSQHSY) the composition is skewed to low complexity. A compositionally biased stretch (acidic residues) spans 858–871 (EEPESESESEPEAE). 2 stretches are compositionally biased toward basic and acidic residues: residues 872 to 886 (PEPK…EPAR) and 907 to 917 (YRNESESTFDW). Low complexity-rich tracts occupy residues 1333–1354 (PNIP…SVSV), 1395–1419 (VPSS…VSAK), and 1584–1601 (LLGT…SSGL).

In terms of tissue distribution, expressed in gonad distal tip cells and gonad sheath cells.

Its subcellular location is the nucleus. It localises to the cytoplasm. During gonad development, involved in distal tip cell (DTC) migration from the dorsal side of the hermaphrodite body to the midbody which allows for the formation of gonad arms. Role in gonad DTC migration may be in association with integrin related proteins ina-1 and mig-15. The chain is Abnormal cell migration protein 38 from Caenorhabditis elegans.